A 144-amino-acid chain; its full sequence is Large ribosomal subunit protein uL13 (144 aa).

Belongs to the universal ribosomal protein uL13 family. As to quaternary structure, part of the 50S ribosomal subunit.

Its function is as follows. This protein is one of the early assembly proteins of the 50S ribosomal subunit, although it is not seen to bind rRNA by itself. It is important during the early stages of 50S assembly. The chain is Large ribosomal subunit protein uL13 from Moorella thermoacetica (strain ATCC 39073 / JCM 9320).